The chain runs to 236 residues: Zinc finger AN1 domain-containing stress-associated protein 13 (236 aa).

Disordered regions lie at residues 48–81 (KEGRSGGGGGSEGQRTDSRLQLPTTSIVDSPGKR) and 150–173 (TVPEGIPVDEGAMPPPPPPRAKTK). Residues 66–75 (RLQLPTTSIV) show a composition bias toward polar residues. The AN1-type; degenerate zinc-finger motif lies at 170–216 (AKTKSRCAACGRRVGLMGFECRCGAVFCGAHPLLGQARLWLRLQGRA). Residues C176, C179, C197, and H200 each contribute to the Zn(2+) site.

In terms of biological role, may be involved in environmental stress response. The chain is Zinc finger AN1 domain-containing stress-associated protein 13 (SAP13) from Oryza sativa subsp. japonica (Rice).